Consider the following 444-residue polypeptide: Protein Z-dependent protease inhibitor (444 aa).

Positions 1–21 (MKVVPSLLLSVLLAQVWLVPG) are cleaved as a signal peptide. Positions 24 to 65 (PSPQSPETPAPQNQTSRVVQAPKEEEEDEQEASEEKASEEEK) are disordered. Asn-36 carries N-linked (GlcNAc...) asparagine glycosylation. A Phosphoserine; by FAM20C modification is found at Ser-56. The segment covering 56-65 (SEEKASEEEK) has biased composition (basic and acidic residues). The segment at 136–153 (TKPGLLPSLFKGLRETLS) is heparin-binding. 3 N-linked (GlcNAc...) asparagine glycosylation sites follow: Asn-180, Asn-197, and Asn-295.

The protein belongs to the serpin family. As to quaternary structure, interacts with PROZ. Post-translationally, phosphorylated by FAM20C in the extracellular medium. In terms of tissue distribution, expressed by the liver and secreted in plasma.

It localises to the secreted. Inhibits activity of the coagulation protease factor Xa in the presence of PROZ, calcium and phospholipids. Also inhibits factor XIa in the absence of cofactors. The chain is Protein Z-dependent protease inhibitor (SERPINA10) from Homo sapiens (Human).